A 161-amino-acid polypeptide reads, in one-letter code: uncharacterized protein (161 aa).

The protein belongs to the SixA phosphatase family.

This is an uncharacterized protein from Mycobacterium leprae (strain TN).